A 1710-amino-acid polypeptide reads, in one-letter code: Phosphatidylinositol 4-phosphate 5-kinase (1710 aa).

In terms of domain architecture, EF-hand spans 68-98 (YKSIFKAFDLNNDNYLDFYEFCVAINIMLKG). Ca(2+) contacts are provided by D76, N78, D80, Y82, and E87. Disordered stretches follow at residues 139–255 (NNMN…DPIN), 427–479 (KQKK…IKSV), and 895–993 (GEGH…HNNN). The span at 140–235 (NMNGDNINGD…HNNNSHNNNN (96 aa)) shows a compositional bias: low complexity. Residues 236 to 248 (KAENSLGQPLNEK) show a composition bias toward polar residues. Over residues 427 to 444 (KQKKKKKKKKKKKKKKEK) the composition is skewed to basic residues. The segment covering 456 to 468 (SSSMENKSQNKSQ) has biased composition (low complexity). Residues 902 to 973 (EEEEKNDDEE…DDNDDNDDND (72 aa)) are compositionally biased toward acidic residues. The span at 974–987 (EKSNIKIENKKDVP) shows a compositional bias: basic and acidic residues. The PIPK domain occupies 1334 to 1709 (QKKTFHRILA…RFVTFIENHM (376 aa)).

The catalysed reaction is a 1,2-diacyl-sn-glycero-3-phospho-(1D-myo-inositol 4-phosphate) + ATP = a 1,2-diacyl-sn-glycero-3-phospho-(1D-myo-inositol-4,5-bisphosphate) + ADP + H(+). With respect to regulation, catalytic activity is increase by myristoylated ARF1. Phosphatidic acid has no effect on catalytic activity. Functionally, catalyzes the phosphorylation of phosphatidylinositol 4-phosphate (PtdIns(4)P/PI4P) to form phosphatidylinositol 4,5-bisphosphate (PtdIns(4,5)P2/PIP2), a lipid second messenger that regulates several cellular processes. The chain is Phosphatidylinositol 4-phosphate 5-kinase from Plasmodium falciparum (isolate 3D7).